We begin with the raw amino-acid sequence, 281 residues long: sn-glycerol-3-phosphate transport system permease protein UgpE (281 aa).

Helical transmembrane passes span 16–36 (LILG…AATL), 85–105 (FSIT…IVWF), 113–133 (FFWM…FPTV), 142–162 (LDSY…TFLF), 202–222 (ALFV…LLII), and 247–267 (WNSV…IVLV). The ABC transmembrane type-1 domain maps to 77–268 (LLNSFVMAFS…IPPVVIVLVM (192 aa)).

Belongs to the binding-protein-dependent transport system permease family. UgpAE subfamily. As to quaternary structure, the complex is composed of two ATP-binding proteins (UgpC), two transmembrane proteins (UgpA and UgpE) and a solute-binding protein (UgpB).

The protein resides in the cell inner membrane. Its function is as follows. Part of the ABC transporter complex UgpBAEC involved in sn-glycerol-3-phosphate (G3P) import. Probably responsible for the translocation of the substrate across the membrane. The sequence is that of sn-glycerol-3-phosphate transport system permease protein UgpE (ugpE) from Escherichia coli O6:K15:H31 (strain 536 / UPEC).